The sequence spans 465 residues: Lactaldehyde dehydrogenase (465 aa).

220–225 (GSVEVG) is a binding site for NAD(+). Catalysis depends on residues E240 and C274.

This sequence belongs to the aldehyde dehydrogenase family. As to quaternary structure, homotetramer.

The catalysed reaction is (S)-lactaldehyde + NAD(+) + H2O = (S)-lactate + NADH + 2 H(+). It participates in cofactor biosynthesis; coenzyme F420 biosynthesis. Functionally, involved in F420 biosynthesis through the oxidation of lactaldehyde to lactate. In Methanococcus aeolicus (strain ATCC BAA-1280 / DSM 17508 / OCM 812 / Nankai-3), this protein is Lactaldehyde dehydrogenase.